A 1625-amino-acid chain; its full sequence is Probable cation-transporting ATPase I (1625 aa).

The next 8 helical transmembrane spans lie at 148–168, 177–197, 358–378, 637–657, 673–693, 778–798, 968–988, and 997–1017; these read VVSA…PNSA, LAIL…GATV, LIAA…AGAI, ASES…LLLV, WLNP…WSAA, ILAV…ALLV, LTSK…ALAL, and AVAD…PLVA. Aspartate 1053 (4-aspartylphosphate intermediate) is an active-site residue. Aspartate 1340 and aspartate 1344 together coordinate Mg(2+). 3 helical membrane-spanning segments follow: residues 1401 to 1421, 1432 to 1452, and 1547 to 1567; these read ILVG…AFGA, LLVN…TSQF, and VIAT…TPVI.

It belongs to the cation transport ATPase (P-type) (TC 3.A.3) family.

The protein resides in the cell membrane. The enzyme catalyses ATP + H2O = ADP + phosphate + H(+). The sequence is that of Probable cation-transporting ATPase I (ctpI) from Mycobacterium tuberculosis (strain CDC 1551 / Oshkosh).